The following is a 159-amino-acid chain: Phosphopantetheine adenylyltransferase (159 aa).

Position 8 (threonine 8) interacts with substrate. ATP is bound by residues 8–9 (TF) and histidine 16. Lysine 40, threonine 72, and arginine 86 together coordinate substrate. ATP-binding positions include 87–89 (GLR), glutamate 97, and 122–128 (YSFLSSS).

This sequence belongs to the bacterial CoaD family. As to quaternary structure, homohexamer. It depends on Mg(2+) as a cofactor.

It localises to the cytoplasm. It carries out the reaction (R)-4'-phosphopantetheine + ATP + H(+) = 3'-dephospho-CoA + diphosphate. It participates in cofactor biosynthesis; coenzyme A biosynthesis; CoA from (R)-pantothenate: step 4/5. Reversibly transfers an adenylyl group from ATP to 4'-phosphopantetheine, yielding dephospho-CoA (dPCoA) and pyrophosphate. The protein is Phosphopantetheine adenylyltransferase of Prochlorococcus marinus subsp. pastoris (strain CCMP1986 / NIES-2087 / MED4).